The sequence spans 158 residues: uncharacterized protein (158 aa).

2 helical membrane-spanning segments follow: residues L66–M86 and F94–I114.

It is found in the membrane. This is an uncharacterized protein from Saccharomyces cerevisiae (strain ATCC 204508 / S288c) (Baker's yeast).